The primary structure comprises 392 residues: Tropomodulin (392 aa).

3 disordered regions span residues 1-30, 59-90, and 118-138; these read MSQA…QLPS, DLNN…GPYK, and QKRG…PENG. Polar residues predominate over residues 16–29; the sequence is SAPSANSQQGTQLP. 2 stretches are compositionally biased toward basic and acidic residues: residues 76–90 and 122–138; these read RCRD…GPYK and KVYD…PENG.

Belongs to the tropomodulin family. Binds to the N-terminus of actin.

It is found in the cytoplasm. The protein localises to the cytoskeleton. Acts as the pointed end capping protein which maintains the length and dynamics of the actin filament. Blocks the elongation and depolymerization of the actin filaments at the pointed end. The polypeptide is Tropomodulin (unc-94) (Caenorhabditis elegans).